The following is a 425-amino-acid chain: Enolase (425 aa).

Residue Q162 coordinates (2R)-2-phosphoglycerate. E204 functions as the Proton donor in the catalytic mechanism. 3 residues coordinate Mg(2+): D241, E282, and D309. (2R)-2-phosphoglycerate-binding residues include K334, R363, S364, and K385. The Proton acceptor role is filled by K334.

It belongs to the enolase family. Mg(2+) is required as a cofactor.

Its subcellular location is the cytoplasm. It localises to the secreted. It is found in the cell surface. The catalysed reaction is (2R)-2-phosphoglycerate = phosphoenolpyruvate + H2O. The protein operates within carbohydrate degradation; glycolysis; pyruvate from D-glyceraldehyde 3-phosphate: step 4/5. Its function is as follows. Catalyzes the reversible conversion of 2-phosphoglycerate (2-PG) into phosphoenolpyruvate (PEP). It is essential for the degradation of carbohydrates via glycolysis. This Corynebacterium efficiens (strain DSM 44549 / YS-314 / AJ 12310 / JCM 11189 / NBRC 100395) protein is Enolase.